We begin with the raw amino-acid sequence, 272 residues long: Phosphate import ATP-binding protein PstB 2 (272 aa).

The region spanning 26 to 267 (IEINNLCLNY…PIHKQTEDYI (242 aa)) is the ABC transporter domain. Residue 58-65 (GPSGCGKS) coordinates ATP.

Belongs to the ABC transporter superfamily. Phosphate importer (TC 3.A.1.7) family. The complex is composed of two ATP-binding proteins (PstB), two transmembrane proteins (PstC and PstA) and a solute-binding protein (PstS).

It is found in the cell inner membrane. It carries out the reaction phosphate(out) + ATP + H2O = ADP + 2 phosphate(in) + H(+). In terms of biological role, part of the ABC transporter complex PstSACB involved in phosphate import. Responsible for energy coupling to the transport system. In Aliivibrio fischeri (strain ATCC 700601 / ES114) (Vibrio fischeri), this protein is Phosphate import ATP-binding protein PstB 2.